A 182-amino-acid chain; its full sequence is Oligoribonuclease (182 aa).

In terms of domain architecture, Exonuclease spans 8-171; it reads LLWLDMEMTG…ADIYESIDEL (164 aa). Residue Tyr-129 is part of the active site.

Belongs to the oligoribonuclease family.

It is found in the cytoplasm. 3'-to-5' exoribonuclease specific for small oligoribonucleotides. This chain is Oligoribonuclease, found in Thiobacillus denitrificans (strain ATCC 25259 / T1).